The primary structure comprises 173 residues: Co-chaperone protein HscB homolog (173 aa).

Residues 5 to 77 (CHFAQFDLQP…PRRALYLLTL (73 aa)) form the J domain.

The protein belongs to the HscB family. In terms of assembly, interacts with HscA and stimulates its ATPase activity.

Functionally, co-chaperone involved in the maturation of iron-sulfur cluster-containing proteins. Seems to help targeting proteins to be folded toward HscA. The protein is Co-chaperone protein HscB homolog of Pseudomonas aeruginosa (strain UCBPP-PA14).